The primary structure comprises 91 residues: UPF0250 protein PputGB1_4855 (91 aa).

This sequence belongs to the UPF0250 family.

This is UPF0250 protein PputGB1_4855 from Pseudomonas putida (strain GB-1).